The primary structure comprises 84 residues: uncharacterized protein (84 aa).

This is an uncharacterized protein from Helicobacter pylori (strain ATCC 700392 / 26695) (Campylobacter pylori).